We begin with the raw amino-acid sequence, 334 residues long: Holliday junction branch migration complex subunit RuvB (334 aa).

A large ATPase domain (RuvB-L) region spans residues 1 to 182 (MDDRMIDGEL…FGVLSRLEYY (182 aa)). ATP is bound by residues L21, R22, G63, K66, T67, T68, 129–131 (EDF), R172, Y182, and R219. T67 serves as a coordination point for Mg(2+). A small ATPAse domain (RuvB-S) region spans residues 183 to 253 (EIKDLCNIVE…STKQALEMLQ (71 aa)). A head domain (RuvB-H) region spans residues 256 to 334 (DAGLDHVDHK…HLGIKRTGED (79 aa)). The DNA site is built by R311 and R316.

The protein belongs to the RuvB family. As to quaternary structure, homohexamer. Forms an RuvA(8)-RuvB(12)-Holliday junction (HJ) complex. HJ DNA is sandwiched between 2 RuvA tetramers; dsDNA enters through RuvA and exits via RuvB. An RuvB hexamer assembles on each DNA strand where it exits the tetramer. Each RuvB hexamer is contacted by two RuvA subunits (via domain III) on 2 adjacent RuvB subunits; this complex drives branch migration. In the full resolvosome a probable DNA-RuvA(4)-RuvB(12)-RuvC(2) complex forms which resolves the HJ.

It localises to the cytoplasm. It carries out the reaction ATP + H2O = ADP + phosphate + H(+). Functionally, the RuvA-RuvB-RuvC complex processes Holliday junction (HJ) DNA during genetic recombination and DNA repair, while the RuvA-RuvB complex plays an important role in the rescue of blocked DNA replication forks via replication fork reversal (RFR). RuvA specifically binds to HJ cruciform DNA, conferring on it an open structure. The RuvB hexamer acts as an ATP-dependent pump, pulling dsDNA into and through the RuvAB complex. RuvB forms 2 homohexamers on either side of HJ DNA bound by 1 or 2 RuvA tetramers; 4 subunits per hexamer contact DNA at a time. Coordinated motions by a converter formed by DNA-disengaged RuvB subunits stimulates ATP hydrolysis and nucleotide exchange. Immobilization of the converter enables RuvB to convert the ATP-contained energy into a lever motion, pulling 2 nucleotides of DNA out of the RuvA tetramer per ATP hydrolyzed, thus driving DNA branch migration. The RuvB motors rotate together with the DNA substrate, which together with the progressing nucleotide cycle form the mechanistic basis for DNA recombination by continuous HJ branch migration. Branch migration allows RuvC to scan DNA until it finds its consensus sequence, where it cleaves and resolves cruciform DNA. This Oceanobacillus iheyensis (strain DSM 14371 / CIP 107618 / JCM 11309 / KCTC 3954 / HTE831) protein is Holliday junction branch migration complex subunit RuvB.